A 118-amino-acid polypeptide reads, in one-letter code: MARIAGINVPDHKHAVIGLTAIYGIGKTRSKAILAATGIAETTKIGELSDETLDVLRDAVGKYTVEGDLRREVTLNIKRLMDLGCYRGLRHRRSLPLRGQRTKTNARTRKGPRKPIKR.

Positions 94 to 118 are disordered; that stretch reads SLPLRGQRTKTNARTRKGPRKPIKR.

It belongs to the universal ribosomal protein uS13 family. Part of the 30S ribosomal subunit. Forms a loose heterodimer with protein S19. Forms two bridges to the 50S subunit in the 70S ribosome.

Located at the top of the head of the 30S subunit, it contacts several helices of the 16S rRNA. In the 70S ribosome it contacts the 23S rRNA (bridge B1a) and protein L5 of the 50S subunit (bridge B1b), connecting the 2 subunits; these bridges are implicated in subunit movement. Contacts the tRNAs in the A and P-sites. This is Small ribosomal subunit protein uS13 from Pseudoalteromonas translucida (strain TAC 125).